A 317-amino-acid polypeptide reads, in one-letter code: Ceramide reductase (317 aa).

The N-terminal stretch at 1–27 is a signal peptide; it reads MATDARGVVAITGATGFLGRHLVRALA.

The protein belongs to the NAD(P)-dependent epimerase/dehydratase family.

It is found in the periplasm. The catalysed reaction is N-acyl-3-oxosphinganine + NADH + H(+) = an N-acylsphinganine + NAD(+). It participates in lipid metabolism; sphingolipid metabolism. Its function is as follows. Involved in de novo bacterial ceramide synthesis. Catalyzes the reduction of bacterial oxidized ceramides to bacterial dihydroceramides. This Caulobacter vibrioides (strain NA1000 / CB15N) (Caulobacter crescentus) protein is Ceramide reductase.